The chain runs to 445 residues: MANRKYFGTDGVRGKVGAYPITPDFALKLGWAAGKVLSSQGSKMVLIGKDTRISGYMLESALEAGLAAAGLSAAFTGPMPTPAIAYLTRTFRAEAGIVISASHNPYYDNGIKFFSAKGTKLPDEIEEAIEAMLEQPMDCVESAELGKASRINDAAGRYIEFCKGTFPAHLGLEGYKIVIDCANGATYHIAPNVFRELGAEVIEIGTDPNGLNINEKCGATDVTALQAKVVETKADVGLAYDGDGDRIMMVDHLGNKVDGDQILFIIAREALRSGQLKGGVVGTLMSNMSLEIALKMLGVPFLRANVGDRYVLEKMLENDWTLGGENSGHIIIADKNTTGDGIVASLAVLAAMAQHKLSLNELASAVKLFPQVLINVRFAGGENPLESDAVKSVAAEVEKRLEGKGRILLRKSGTEPLIRVMVECQDAELAQQCAEEIAEAVKKIN.

The active-site Phosphoserine intermediate is the Ser102. Positions 102, 241, 243, and 245 each coordinate Mg(2+). Ser102 carries the post-translational modification Phosphoserine.

The protein belongs to the phosphohexose mutase family. The cofactor is Mg(2+). In terms of processing, activated by phosphorylation.

The enzyme catalyses alpha-D-glucosamine 1-phosphate = D-glucosamine 6-phosphate. In terms of biological role, catalyzes the conversion of glucosamine-6-phosphate to glucosamine-1-phosphate. In Haemophilus influenzae (strain PittEE), this protein is Phosphoglucosamine mutase.